Consider the following 229-residue polypeptide: 3-dehydroquinate dehydratase (229 aa).

3-dehydroquinate is bound by residues 29 to 31 (ELR) and Arg56. Catalysis depends on His120, which acts as the Proton donor/acceptor. Lys146 acts as the Schiff-base intermediate with substrate in catalysis. 3 residues coordinate 3-dehydroquinate: Arg187, Thr208, and Gln212.

It belongs to the type-I 3-dehydroquinase family. In terms of assembly, homodimer.

The catalysed reaction is 3-dehydroquinate = 3-dehydroshikimate + H2O. The protein operates within metabolic intermediate biosynthesis; chorismate biosynthesis; chorismate from D-erythrose 4-phosphate and phosphoenolpyruvate: step 3/7. In terms of biological role, involved in the third step of the chorismate pathway, which leads to the biosynthesis of aromatic amino acids. Catalyzes the cis-dehydration of 3-dehydroquinate (DHQ) and introduces the first double bond of the aromatic ring to yield 3-dehydroshikimate. In Haloarcula marismortui (strain ATCC 43049 / DSM 3752 / JCM 8966 / VKM B-1809) (Halobacterium marismortui), this protein is 3-dehydroquinate dehydratase.